The chain runs to 619 residues: Probable transporter mch1 (619 aa).

The next 12 helical transmembrane spans lie at 88 to 108, 120 to 140, 147 to 167, 184 to 204, 219 to 239, 261 to 281, 377 to 397, 428 to 448, 480 to 500, 515 to 535, 541 to 561, and 589 to 609; these read VISC…PLFL, AVSI…GYLC, PLAL…AFAY, VMVV…LAAV, IMLA…SQVA, FLFL…GLRI, TMWW…AYIN, IIAL…DFFA, LAFL…LSSP, LIGL…SVVW, GTNW…WGVI, and FWAV…ILAW.

The protein belongs to the major facilitator superfamily.

Its subcellular location is the vacuole membrane. In terms of biological role, probable transporter. The sequence is that of Probable transporter mch1 (mch1) from Aspergillus fumigatus (strain ATCC MYA-4609 / CBS 101355 / FGSC A1100 / Af293) (Neosartorya fumigata).